Here is a 206-residue protein sequence, read N- to C-terminus: MCKWKIQFLDFCLEKKVLKFGKFQLKSGKCSPYYFNSGLFNTGNDLQKLGYFYAKTIIESNLDYKAIFGVAYKGIPIVISTAIALRKYFNINIPYCFNRKELKKHGEKGNFIGQKLTGKIILLDDVMTSGFSINDTINFIHSHANTKISGIIIALDRTRNINNKKNIQKNIEKKYNLKIFSIISILDIINYFKKKKHLHIYLKYII.

5-phospho-alpha-D-ribose 1-diphosphate-binding positions include lysine 26, 72–73 (YK), arginine 99, lysine 100, lysine 103, histidine 105, and 124–132 (DDVMTSGFS). Threonine 128 and arginine 157 together coordinate orotate.

Belongs to the purine/pyrimidine phosphoribosyltransferase family. PyrE subfamily. In terms of assembly, homodimer. It depends on Mg(2+) as a cofactor.

It catalyses the reaction orotidine 5'-phosphate + diphosphate = orotate + 5-phospho-alpha-D-ribose 1-diphosphate. It functions in the pathway pyrimidine metabolism; UMP biosynthesis via de novo pathway; UMP from orotate: step 1/2. Catalyzes the transfer of a ribosyl phosphate group from 5-phosphoribose 1-diphosphate to orotate, leading to the formation of orotidine monophosphate (OMP). The chain is Orotate phosphoribosyltransferase from Buchnera aphidicola subsp. Baizongia pistaciae (strain Bp).